The sequence spans 138 residues: Acidic phospholipase A2 inhibitor vaspin A chain (138 aa).

Positions 1-16 (MRTLWIVAVCLIGVEG) are cleaved as a signal peptide. 7 cysteine pairs are disulfide-bonded: cysteine 42–cysteine 131, cysteine 44–cysteine 60, cysteine 59–cysteine 111, cysteine 65–cysteine 138, cysteine 66–cysteine 104, cysteine 73–cysteine 97, and cysteine 91–cysteine 102.

This sequence belongs to the phospholipase A2 family. Group II subfamily. D49 sub-subfamily. Heterodimer of a toxic basic protein having phospholipase A2 activity (B chain (AC Q8JFG0)) and a non-toxic acidic protein functioning as its inhibitor (A chain). As to expression, expressed by the venom gland.

The protein resides in the secreted. Its function is as follows. Heterodimer: postsynaptic neurotoxin. Functionally, monomer: the acidic chain inhibits the basic phospholipase A2 of the complex. The polypeptide is Acidic phospholipase A2 inhibitor vaspin A chain (Vipera aspis aspis (Aspic viper)).